The sequence spans 895 residues: ABC-transporter-regulating transcription factor (895 aa).

Positions 69 to 96 (CDMCRKKKIKCDGKMPKCSHCTNYKTDC) form a DNA-binding region, zn(2)-C6 fungal-type. A disordered region spans residues 156 to 218 (HASGSNTPHN…QKESETEVEG (63 aa)). A compositionally biased stretch (polar residues) spans 158–207 (SGSNTPHNPQKINIPSQSQIAMSQQNSSSHYSTPRLESQSSPRTAATSPE). A helical transmembrane segment spans residues 648–668 (CVWLILYYPVSALVTLFANIL). Residues 726–813 (ESYSKKKRKS…TGVSTNIPPN (88 aa)) are disordered. Residues 755–765 (PSTTQPTQAPS) show a composition bias toward low complexity.

Interacts with ncaA.

Its subcellular location is the nucleus. It is found in the membrane. In terms of biological role, transcription factor that regulates expression of the genes related to ergosterol biosynthesis, including erg3B, erg24A, erg25A, as well as cyp51A that encodes a target protein of azoles. In coordination with ffmA and ncaA, is responsible for the expression of the ABC transporter abcC/cdr1B/abcG1 related to azole resistance. Directly binds both the cyp51A and abcC/cdr1B/abcG1 promoters at a conserved 34 bp region called the atrR response element (ATRE). AtrR also binds to the promoter regions of both the sterol response transcription factor srbA and atrR genes themselves, the latter suggesting the possibility that atrR is autoregulated. Also regulates iron uptake, most likely via cooperation with SrbA. AtrR is necessary for hypoxia adaptation and virulence. The protein is ABC-transporter-regulating transcription factor of Aspergillus fumigatus (strain ATCC MYA-4609 / CBS 101355 / FGSC A1100 / Af293) (Neosartorya fumigata).